Consider the following 885-residue polypeptide: Leucine--tRNA ligase (885 aa).

The 'HIGH' region motif lies at 48–58 (PYPSGKLHMGH). The short motif at 639-643 (TMSKS) is the 'KMSKS' region element. Residue K642 participates in ATP binding.

The protein belongs to the class-I aminoacyl-tRNA synthetase family.

The protein resides in the cytoplasm. It catalyses the reaction tRNA(Leu) + L-leucine + ATP = L-leucyl-tRNA(Leu) + AMP + diphosphate. The chain is Leucine--tRNA ligase from Bordetella parapertussis (strain 12822 / ATCC BAA-587 / NCTC 13253).